The following is a 657-amino-acid chain: Protein PSK SIMULATOR 1 (657 aa).

Composition is skewed to polar residues over residues 1-15 (MGGL…NNAP), 26-39 (HLNN…SHSG), 62-76 (ESFS…SHPQ), and 540-556 (RSPN…SHNP). Disordered stretches follow at residues 1–80 (MGGL…NIED) and 534–559 (PVKS…PSMG). The N-myristoyl glycine moiety is linked to residue glycine 2.

The protein localises to the nucleus. Its function is as follows. Promotes seedling growth probably via the regulation of phytosulfokine (PSK) signaling; PSK are peptide phytohormones acting as growth factors. Together with PSI2 and PSI3, required during vegetative growth and reproduction. May also have a function in carbohydrate metabolism. This chain is Protein PSK SIMULATOR 1, found in Arabidopsis thaliana (Mouse-ear cress).